The following is a 320-amino-acid chain: Ribosomal RNA small subunit methyltransferase H (320 aa).

S-adenosyl-L-methionine contacts are provided by residues 42–44 (GGH), D62, F86, D108, and Q115.

This sequence belongs to the methyltransferase superfamily. RsmH family.

Its subcellular location is the cytoplasm. It carries out the reaction cytidine(1402) in 16S rRNA + S-adenosyl-L-methionine = N(4)-methylcytidine(1402) in 16S rRNA + S-adenosyl-L-homocysteine + H(+). Functionally, specifically methylates the N4 position of cytidine in position 1402 (C1402) of 16S rRNA. The protein is Ribosomal RNA small subunit methyltransferase H of Yersinia pseudotuberculosis serotype O:1b (strain IP 31758).